Reading from the N-terminus, the 282-residue chain is D-alanine aminotransferase (282 aa).

A substrate-binding site is contributed by Tyr32. Arg51 contributes to the pyridoxal 5'-phosphate binding site. The substrate site is built by Arg99 and His101. Catalysis depends on Lys146, which acts as the Proton acceptor. Lys146 carries the post-translational modification N6-(pyridoxal phosphate)lysine. Position 178 (Glu178) interacts with pyridoxal 5'-phosphate.

It belongs to the class-IV pyridoxal-phosphate-dependent aminotransferase family. In terms of assembly, homodimer. It depends on pyridoxal 5'-phosphate as a cofactor.

It catalyses the reaction D-alanine + 2-oxoglutarate = D-glutamate + pyruvate. Functionally, acts on the D-isomers of alanine, leucine, aspartate, glutamate, aminobutyrate, norvaline and asparagine. The enzyme transfers an amino group from a substrate D-amino acid to the pyridoxal phosphate cofactor to form pyridoxamine and an alpha-keto acid in the first half-reaction. The second half-reaction is the reverse of the first, transferring the amino group from the pyridoxamine to a second alpha-keto acid to form the product D-amino acid via a ping-pong mechanism. This is an important process in the formation of D-alanine and D-glutamate, which are essential bacterial cell wall components. The protein is D-alanine aminotransferase (dat) of Staphylococcus haemolyticus.